The chain runs to 97 residues: Co-chaperonin GroES (97 aa).

It belongs to the GroES chaperonin family. As to quaternary structure, heptamer of 7 subunits arranged in a ring. Interacts with the chaperonin GroEL.

Its subcellular location is the cytoplasm. Functionally, together with the chaperonin GroEL, plays an essential role in assisting protein folding. The GroEL-GroES system forms a nano-cage that allows encapsulation of the non-native substrate proteins and provides a physical environment optimized to promote and accelerate protein folding. GroES binds to the apical surface of the GroEL ring, thereby capping the opening of the GroEL channel. The polypeptide is Co-chaperonin GroES (Pseudomonas savastanoi pv. phaseolicola (strain 1448A / Race 6) (Pseudomonas syringae pv. phaseolicola (strain 1448A / Race 6))).